A 570-amino-acid chain; its full sequence is Capsid vertex component 2 (570 aa).

The interaction with major capsid protein/MCP stretch occupies residues 1–54 (MALSGHVLIDPARLPRDTGPELMWAPSLRNSLRVSPEALELAEREAERARSERW). The interval 102–123 (QVRSPSTGGRSAPAPPSPSPAQ) is disordered.

Belongs to the herpesviridae CVC2 protein family. In terms of assembly, heterodimerizes with CVC1. Interacts with major capsid protein/MCP and triplex capsid protein 1/TRX1 at the pentamer vertices. Interacts with the large tegument protein/LTP.

Its subcellular location is the virion. It is found in the host nucleus. In terms of biological role, capsid vertex-specific component that plays a role during viral DNA encapsidation, assuring correct genome cleavage and presumably stabilizing capsids that contain full-length viral genomes. Participates in the interaction between the capsid and the tegument through interaction with the large tegument protein/LTP. This is Capsid vertex component 2 from Homo sapiens (Human).